Consider the following 59-residue polypeptide: Small ribosomal subunit protein bS21 (59 aa).

Residues 40 to 59 (KPSIKKRAKSKAALKYKKQR) are disordered.

Belongs to the bacterial ribosomal protein bS21 family.

This Protochlamydia amoebophila (strain UWE25) protein is Small ribosomal subunit protein bS21.